A 1187-amino-acid polypeptide reads, in one-letter code: Tyrosine-protein phosphatase non-receptor type 14 (1187 aa).

An FERM domain is found at 21-306 (FVTRIRLLDS…TRHKFYKQNK (286 aa)). Phosphoserine occurs at positions 314, 461, and 486. The segment covering 510 to 524 (LVSPSDQRNPKNNVV) has biased composition (polar residues). Residues 510–531 (LVSPSDQRNPKNNVVPSKPGAS) form a disordered region. 4 positions are modified to phosphoserine: Ser-591, Ser-593, Ser-594, and Ser-642. 2 disordered regions span residues 671-690 (LREQGPPEEGSGSHEVPQLP) and 787-824 (KAISMSRTDPPAVNGASLGPSISEPDLTSVKERVKKEP). Positions 815-824 (SVKERVKKEP) are enriched in basic and acidic residues. Phosphoserine is present on Ser-831. Positions 909–1180 (VFTEYEQIPK…KFVYQVLIQF (272 aa)) constitute a Tyrosine-protein phosphatase domain. Residues Asp-1079, 1121 to 1127 (CSAGVGR), and Gln-1165 contribute to the substrate site. Cys-1121 (phosphocysteine intermediate) is an active-site residue.

The protein belongs to the protein-tyrosine phosphatase family. Non-receptor class subfamily. Interacts with FLT4; the interaction is enhanced by stimulation with VEGFC. Interacts (via PPxY motifs) with YAP1 (via WW domains); this interaction leads to the cytoplasmic sequestration of YAP1 and inhibits its transcriptional co-activator activity. Ubiquitinated by the ECS (Elongin BC-CUL2/5-SOCS-box protein)/LRR1 E3 ligase complex and subsequently targeted to proteasomal degradation. In terms of tissue distribution, ubiquitous.

It is found in the cytoplasm. Its subcellular location is the cytoskeleton. It localises to the nucleus. It catalyses the reaction O-phospho-L-tyrosyl-[protein] + H2O = L-tyrosyl-[protein] + phosphate. Its function is as follows. Protein tyrosine phosphatase which may play a role in the regulation of lymphangiogenesis, cell-cell adhesion, cell-matrix adhesion, cell migration, cell growth and also regulates TGF-beta gene expression, thereby modulating epithelial-mesenchymal transition. Mediates beta-catenin dephosphorylation at adhesion junctions. Acts as a negative regulator of the oncogenic property of YAP, a downstream target of the hippo pathway, in a cell density-dependent manner. May function as a tumor suppressor. This chain is Tyrosine-protein phosphatase non-receptor type 14 (PTPN14), found in Homo sapiens (Human).